The sequence spans 496 residues: uncharacterized protein (496 aa).

Basic and acidic residues predominate over residues 118–129; sequence LDRPFIKPRREN. Residues 118–187 are disordered; sequence LDRPFIKPRR…NPHQSNRNTS (70 aa). The span at 151-187 shows a compositional bias: polar residues; the sequence is TSDSQYASPFENHSITNLPIGQKQPFNNPHQSNRNTS.

This is an uncharacterized protein from Acanthamoeba polyphaga mimivirus (APMV).